The following is a 295-amino-acid chain: 4-hydroxy-tetrahydrodipicolinate synthase (295 aa).

Position 47 (Thr-47) interacts with pyruvate. The active-site Proton donor/acceptor is the Tyr-135. Lys-163 acts as the Schiff-base intermediate with substrate in catalysis. Ile-206 is a binding site for pyruvate.

Belongs to the DapA family. In terms of assembly, homodimer.

The protein resides in the cytoplasm. The catalysed reaction is L-aspartate 4-semialdehyde + pyruvate = (2S,4S)-4-hydroxy-2,3,4,5-tetrahydrodipicolinate + H2O + H(+). It participates in amino-acid biosynthesis; L-lysine biosynthesis via DAP pathway; (S)-tetrahydrodipicolinate from L-aspartate: step 3/4. Functionally, catalyzes the condensation of (S)-aspartate-beta-semialdehyde [(S)-ASA] and pyruvate to 4-hydroxy-tetrahydrodipicolinate (HTPA). This is 4-hydroxy-tetrahydrodipicolinate synthase from Staphylococcus aureus (strain Mu50 / ATCC 700699).